The sequence spans 30 residues: Trypsin inhibitor 3 (30 aa).

Disulfide bonds link Cys4-Cys21, Cys11-Cys23, and Cys17-Cys29.

Belongs to the protease inhibitor I7 (squash-type serine protease inhibitor) family.

The protein localises to the secreted. In terms of biological role, inhibits trypsin. The protein is Trypsin inhibitor 3 of Momordica charantia (Bitter gourd).